The following is a 185-amino-acid chain: Ribosome maturation factor RimM (185 aa).

The PRC barrel domain occupies 105-184; that stretch reads KDEYYWKDII…IVVVDWEIYK (80 aa).

This sequence belongs to the RimM family. As to quaternary structure, binds ribosomal protein uS19.

Its subcellular location is the cytoplasm. An accessory protein needed during the final step in the assembly of 30S ribosomal subunit, possibly for assembly of the head region. Essential for efficient processing of 16S rRNA. May be needed both before and after RbfA during the maturation of 16S rRNA. It has affinity for free ribosomal 30S subunits but not for 70S ribosomes. This chain is Ribosome maturation factor RimM, found in Blochmanniella floridana.